Reading from the N-terminus, the 487-residue chain is Betaine aldehyde dehydrogenase (487 aa).

K(+)-binding residues include Ser26 and Asp93. Position 150-152 (150-152 (GAW)) interacts with NAD(+). Lys162 (charge relay system) is an active-site residue. NAD(+)-binding positions include 176 to 179 (KPSE) and 229 to 232 (SVPT). Leu244 contacts K(+). Glu250 acts as the Proton acceptor in catalysis. Residues Gly252, Cys284, and Glu384 each coordinate NAD(+). The active-site Nucleophile is the Cys284. A Cysteine sulfenic acid (-SOH) modification is found at Cys284. Residues Lys454 and Gly457 each contribute to the K(+) site. The active-site Charge relay system is Glu461.

This sequence belongs to the aldehyde dehydrogenase family. As to quaternary structure, dimer of dimers. K(+) is required as a cofactor.

The enzyme catalyses betaine aldehyde + NAD(+) + H2O = glycine betaine + NADH + 2 H(+). Its pathway is amine and polyamine biosynthesis; betaine biosynthesis via choline pathway; betaine from betaine aldehyde: step 1/1. Its function is as follows. Involved in the biosynthesis of the osmoprotectant glycine betaine. Catalyzes the irreversible oxidation of betaine aldehyde to the corresponding acid. This Rhizobium leguminosarum bv. trifolii (strain WSM2304) protein is Betaine aldehyde dehydrogenase.